The following is a 361-amino-acid chain: Feruloyl CoA ortho-hydroxylase 2 (361 aa).

The 102-residue stretch at 211–312 (GSTRINLNYY…RISVPIFVSP (102 aa)) folds into the Fe2OG dioxygenase domain. Position 220 (tyrosine 220) interacts with 2-oxoglutarate. 3 residues coordinate Fe cation: histidine 235, aspartate 237, and histidine 293. Arginine 303 and serine 305 together coordinate 2-oxoglutarate.

The protein belongs to the iron/ascorbate-dependent oxidoreductase family. Requires L-ascorbate as cofactor. The cofactor is Fe(2+). As to expression, low expression in roots.

It carries out the reaction (E)-feruloyl-CoA + 2-oxoglutarate + O2 = (E)-6-hydroxyferuloyl-CoA + succinate + CO2. The catalysed reaction is (E)-6-hydroxyferuloyl-CoA = scopoletin + CoA. Its function is as follows. 2-oxoglutarate (OG)- and Fe(II)-dependent dioxygenase (2OGD)involved in scopoletin biosynthesis. Converts feruloyl CoA into 6'-hydroxyferuloyl CoA but has no activity with ferulic acid, feruloylquinic acid, caffeic acid, caffeoyl CoA, p-coumaric acid, cinnamic acid, cinnamoyl CoA or benzoyl CoA. This Arabidopsis thaliana (Mouse-ear cress) protein is Feruloyl CoA ortho-hydroxylase 2.